We begin with the raw amino-acid sequence, 167 residues long: Centrin-3 (167 aa).

EF-hand domains follow at residues 25–60 (EQKQEIKDAFELFDTDKDEAIDYHELKVAMRALGFD), 61–96 (VKKADVLKILKDYDREATGKITFEDFNEVVTDWILE), 98–133 (DPHEEILKAFKLFDDDDSGKISLRNLRRVARELGEN), and 134–167 (MSDEELRAMIEEFDKDGDGEINQEEFIAIMTGDI). S135 carries the post-translational modification Phosphoserine. Ca(2+)-binding residues include D147, D149, D151, E153, and E158.

It belongs to the centrin family. Monomer. Component of the nuclear pore complex (NPC)-associated TREX-2 complex (transcription and export complex 2), composed of at least GANP, 2 copies of ENY2, PCID2, SEM1/DSS1, and either centrin CETN2 or centrin CETN3. The TREX-2 complex also associates with ALYREF/ALY and with the nucleoporin NUP153. Interacts with USP49.

It localises to the cytoplasm. The protein resides in the cytoskeleton. It is found in the microtubule organizing center. Its subcellular location is the centrosome. The protein localises to the nucleus. It localises to the nucleolus. The protein resides in the nucleus envelope. It is found in the nuclear pore complex. Its subcellular location is the centriole. In terms of biological role, plays a fundamental role in microtubule-organizing center structure and function. Its function is as follows. As a component of the TREX-2 complex, involved in the export of mRNAs to the cytoplasm through the nuclear pores. The polypeptide is Centrin-3 (CETN3) (Homo sapiens (Human)).